The primary structure comprises 185 residues: Probable chorismate pyruvate-lyase 1 (185 aa).

The substrate site is built by arginine 68, leucine 106, and glutamate 164.

It belongs to the UbiC family.

It is found in the cytoplasm. The catalysed reaction is chorismate = 4-hydroxybenzoate + pyruvate. The protein operates within cofactor biosynthesis; ubiquinone biosynthesis. Removes the pyruvyl group from chorismate, with concomitant aromatization of the ring, to provide 4-hydroxybenzoate (4HB) for the ubiquinone pathway. This Pseudomonas entomophila (strain L48) protein is Probable chorismate pyruvate-lyase 1.